Reading from the N-terminus, the 521-residue chain is Vang-like protein 2-A (521 aa).

Residues 1-81 form a disordered region; the sequence is MDNDSQYSGY…TTVVTGTSEH (81 aa). The Cytoplasmic portion of the chain corresponds to 1 to 108; it reads MDNDSQYSGY…AKLDCSRHLG (108 aa). Residues 15–33 show a composition bias toward basic residues; sequence GHSRSSRKHRDRRERHRSK. Positions 57–67 are enriched in basic and acidic residues; the sequence is ESTRGEDRDDN. The segment covering 69–81 has biased composition (low complexity); sequence GETTTVVTGTSEH. Residues 109–129 form a helical membrane-spanning segment; it reads VVIGGALALLSFLTPIAFMLL. Residues 130–147 are Extracellular-facing; that stretch reads PQILWREDLEQCGTACEG. Residues 148–168 form a helical membrane-spanning segment; it reads LFISVAFKLLILLLGSWALFF. At 169 to 178 the chain is on the cytoplasmic side; sequence RRPKAFFPRV. A helical transmembrane segment spans residues 179-199; the sequence is FVFRALLMVLVFLLVVSYWLF. Residues 200 to 218 lie on the Extracellular side of the membrane; it reads YGVRILESRDKNYQGIVQY. The chain crosses the membrane as a helical span at residues 219-239; that stretch reads AVSLVDALLFVHYLAVVLLEL. The Cytoplasmic segment spans residues 240–521; the sequence is RQLQPQFTIK…VMRLQSETSV (282 aa). A PDZ-binding motif is present at residues 518–521; sequence ETSV.

The protein belongs to the Vang family. In terms of assembly, interacts with dvl/dsh. Interacts with prickle3. As to expression, during gastrulation, broadly expressed throughout the marginal zone and animal cap region. From the neurula stages, expression becomes concentrated in neural tissues, in the neural plate and neural tube.

It localises to the cell membrane. In terms of biological role, has a role in non-canonical Wnt/planar cell polarity (PCP) signaling; can recruit dvl/dsh and prickle from the cytoplasm to the plasma membrane. Acts in a PCP complex to regulate the polarized assembly of fibronectrin on the surface of the mesoderm during gastrulation. Regulates convergent extension cell movements in both dorsal mesoderm and neural tissue during gastrulation, without affecting cell fate. Regulates neural fold closure during neurulation. May be required for cell surface localization of fzd3 and fzd6 in the inner ear. This chain is Vang-like protein 2-A (vangl2-a), found in Xenopus laevis (African clawed frog).